The following is a 381-amino-acid chain: Cytochrome b (381 aa).

The next 4 membrane-spanning stretches (helical) occupy residues 34 to 54 (FGSL…FLAM), 78 to 99 (WLIR…YLHI), 114 to 134 (WNIG…GYVL), and 179 to 199 (FFAF…IHLL). Heme b-binding residues include His-84 and His-98. Residues His-183 and His-197 each contribute to the heme b site. An a ubiquinone-binding site is contributed by His-202. The next 4 helical transmembrane spans lie at 227–247 (YKDL…ALFM), 289–309 (LGGV…PLLH), 321–341 (MTQI…WIGG), and 348–368 (FMMV…IIMP).

Belongs to the cytochrome b family. In terms of assembly, the cytochrome bc1 complex contains 3 respiratory subunits (MT-CYB, CYC1 and UQCRFS1), 2 core proteins (UQCRC1 and UQCRC2) and probably 6 low-molecular weight proteins. Heme b serves as cofactor.

The protein localises to the mitochondrion inner membrane. Its function is as follows. Component of the ubiquinol-cytochrome c reductase complex (complex III or cytochrome b-c1 complex) that is part of the mitochondrial respiratory chain. The b-c1 complex mediates electron transfer from ubiquinol to cytochrome c. Contributes to the generation of a proton gradient across the mitochondrial membrane that is then used for ATP synthesis. This Prionace glauca (Blue shark) protein is Cytochrome b (mt-cyb).